Reading from the N-terminus, the 217-residue chain is tRNA (guanine-N(7)-)-methyltransferase (217 aa).

S-adenosyl-L-methionine-binding residues include glutamate 46, glutamate 71, aspartate 98, and aspartate 120. Residue aspartate 120 is part of the active site. Substrate is bound at residue lysine 124. The segment at 126–131 is interaction with RNA; the sequence is RHEKRR. Substrate-binding positions include aspartate 156 and 196-199; that span reads TEYE.

Belongs to the class I-like SAM-binding methyltransferase superfamily. TrmB family.

The enzyme catalyses guanosine(46) in tRNA + S-adenosyl-L-methionine = N(7)-methylguanosine(46) in tRNA + S-adenosyl-L-homocysteine. The protein operates within tRNA modification; N(7)-methylguanine-tRNA biosynthesis. Functionally, catalyzes the formation of N(7)-methylguanine at position 46 (m7G46) in tRNA. The chain is tRNA (guanine-N(7)-)-methyltransferase from Lactobacillus gasseri (strain ATCC 33323 / DSM 20243 / BCRC 14619 / CIP 102991 / JCM 1131 / KCTC 3163 / NCIMB 11718 / NCTC 13722 / AM63).